A 1077-amino-acid polypeptide reads, in one-letter code: MHQPPESTAAAAAAADISARKMAHPAMFPRRGSGGGSASALNAAGTGVSGAAPSSEDFPPPSLLQPPPPAASSTQGPQPPPPQSLNLLSQAQLQGQPLAPGGTQMKKKSGFQITSVTPAQISASISSNNSIAEDTESYDDLDESHTEDLSSSEILDVSLSRATDLGEPERSSSEETLNNFQEAETPGAVSPNQPHLPQPHLPHLPQQNVVINGNAHPHHLHHHHHPHHGHHLHHGHHHSSHAAVAGPSIPGGPPSSPVSRKLSTTGSSDGGVPVAPPPAVPSSGLPASVMTNIRTPSTTGSLGINSVTGTSATNNVNIAAVGSFSPSVTNSVHGNANINTSNIPNAASISGGPGVTSVVNSSILSGMGNGTVSSSPVANSVLNAAAGITVGVVSSQQQQQQQQQPTVNTSRFRVVKLDSTSEPFKKGRWTCTEFYEKENAVPATEGVAINKVVETVKQTPTEASSSERESTSGSSVSSSVSTLSHYTESVGSGEMMGAPAVVAPQQPPLPPAPPGLQGVALQQLEFSSPAPQSIAAVSMPQSISQSQMSQVQLQPQELSFQQKQTLQPVPLQATMSAATGIQPSPVSVVGVTAAVGQQPSVSSLAQPQLPYSQTAPPVQTPLPGAPPQQLQYGQQQPMVPAQIAPGHGQPVTQNPTSEYVQQQQQPIFQAALSSGQSSSTGTGAGISVIPVAQAQGIQLPGQPTAVQTQPAGAAGQPIGQAQTAVSTVPTGGQIASIGQQANIPTAVQQPSTQVTPSVIQQGAPPSSQVVLPAPTGIIHQGVQTRASSLPQQLVIAPQSTLVTVPPQPQGVETVAQGVVSQQLPTGSPLPSASTISVTNQVSSAAPSGMPSVPTNLVPPQNIAQPPATQNGSLVQSVSQSPLIATNINLPLAQQIPLSSTQFSTQSLAQAIGSQMEDARRPAEPSLGGLPQTMSGDSGGMSAVSDGSSSSLAAPASLFPLKVLPLTTPLVDGEDESSGASVVAIDNKIEQAMDLVKSHLMYAVREEVEVLKEQIKELIEKNSQLEQENNLLKTLASPEQLAQFQAQLQTGSPPATTQPQGTTQPPAQPASQGSGSTA.

Residues 1-98 are required for interaction with TGFBR1 and promotion of TGF-beta signaling; it reads MHQPPESTAA…SQAQLQGQPL (98 aa). Disordered stretches follow at residues 22–112, 125–283, 458–492, 842–874, and 909–947; these read MAHP…SGFQ, ISSN…VPSS, QTPT…SVGS, SSAA…GSLV, and QAIG…SDGS. The segment covering 58-70 has biased composition (pro residues); sequence FPPPSLLQPPPPA. Over residues 84–96 the composition is skewed to low complexity; that stretch reads SLNLLSQAQLQGQ. The span at 133 to 142 shows a compositional bias: acidic residues; that stretch reads EDTESYDDLD. The segment covering 216 to 240 has biased composition (basic residues); sequence HPHHLHHHHHPHHGHHLHHGHHHSS. Phosphoserine is present on Ser263. Residues 471-489 show a composition bias toward low complexity; that stretch reads TSGSSVSSSVSTLSHYTES. Residues 852–874 show a composition bias toward polar residues; sequence VPTNLVPPQNIAQPPATQNGSLV. Low complexity predominate over residues 933–947; sequence MSGDSGGMSAVSDGS. Residues 1010–1031 form a leucine-zipper region; sequence LKEQIKELIEKNSQLEQENNLL. The segment at 1042 to 1077 is disordered; that stretch reads QFQAQLQTGSPPATTQPQGTTQPPAQPASQGSGSTA. Over residues 1048 to 1077 the composition is skewed to low complexity; sequence QTGSPPATTQPQGTTQPPAQPASQGSGSTA.

This sequence belongs to the TSC-22/Dip/Bun family. As to quaternary structure, forms homodimers. Forms heterodimers. Component of a complex composed of TSC22D1 (via N-terminus), TGFBR1 and TGFBR2; the interaction between TSC22D1 and TGFBR1 is inhibited by SMAD7 and promoted by TGFB1. Interacts with SMAD7; the interaction requires TGF-beta and the interaction is inhibited by TGFBR1. Interacts with TPT1/fortilin; interaction results in the destabilization of TSC22D1 protein and prevents TSC22D1-mediated apoptosis. Interacts with SMAD4 (via N-terminus). Interacts with ACVRL1/ALK1, ACVR1/ALK2, BMPR1A/ALK3, ACVR1B/ALK4, BMPR1B/ALK6, ACVR2A/ACTRII, and BMPR2. Interacts with SMAD6. Interacts with TFE3; the interaction is enhanced in the presence of TGF-beta. In terms of assembly, forms a heterodimer with TSC22D4/THG1. Forms a heterodimer with TSC22D4/THG1. Interacts with histone H1-2. Interacts with GNL3. In terms of tissue distribution, expressed in bone marrow cells (at protein level). Expressed in T-cells. Expressed in the brain. Expressed in the myoepithelial cells of the mammary gland ducts and alveoli, expression is consistent throughout pregnancy, lactation and involution (at protein level). Expressed in the cortex, medulla and papilla of the kidney. As to expression, expressed in the myoepithelial cells of the mammary gland, expression significantly increases in the secretory luminal epithelium of the mammary gland at the initiation of involution, with levels decreasing from day 3 of involution onwards (at protein level). Expressed in the cortex, medulla and papilla of the kidney.

The protein resides in the cytoplasm. It localises to the nucleus. Its subcellular location is the cell membrane. It is found in the mitochondrion. In terms of biological role, transcriptional repressor. Acts on the C-type natriuretic peptide (CNP) promoter. Acts to promote CASP3-mediated apoptosis. Positively regulates TGF-beta signaling by interacting with SMAD7 which inhibits binding of SMAD7 to TGFBR1, preventing recruitment of SMURF ubiquitin ligases to TGFBR1 and inhibiting SMURF-mediated ubiquitination and degradation of TGFBR1. Contributes to enhancement of TGF-beta signaling by binding to and modulating the transcription activator activity of SMAD4. Promotes TGF-beta-induced transcription of COL1A2; via its interaction with TFE3 at E-boxes in the gene proximal promoter. Plays a role in the repression of hematopoietic precursor cell growth. Promotes IL2 deprivation-induced apoptosis in T-lymphocytes, via repression of TSC22D3/GILZ transcription and activation of the caspase cascade. May act to negatively regulate TGFB3 signaling and thereby inhibit cell death in mammary gland cells. Functionally, positively regulates cell death in response to TGFB3 during mammary gland involution. This Mus musculus (Mouse) protein is TSC22 domain family protein 1.